The following is a 61-amino-acid chain: MLKYAIIFAVISLIAGALGFGGVAAGAAGIAKILFGLFLILAVIFVVLAALGVGAVRKGMK.

The next 2 membrane-spanning stretches (helical) occupy residues 5-25 (AIIF…GVAA) and 33-53 (ILFG…ALGV).

It belongs to the UPF0391 family.

The protein resides in the cell membrane. This Polaromonas sp. (strain JS666 / ATCC BAA-500) protein is UPF0391 membrane protein Bpro_0066.